Here is a 327-residue protein sequence, read N- to C-terminus: uncharacterized protein (327 aa).

Residues 1 to 23 form the signal peptide; sequence MGGGRLPPLWLPLLIAWSEWGNC. Residues Asn-144 and Asn-239 are each glycosylated (N-linked (GlcNAc...) asparagine; by host). Positions 298-327 are disordered; that stretch reads EESEAAEETAAGEASAVAAAAVSEEEQRRE. Over residues 305 to 319 the composition is skewed to low complexity; it reads ETAAGEASAVAAAAV.

This is an uncharacterized protein from Human cytomegalovirus (strain AD169) (HHV-5).